We begin with the raw amino-acid sequence, 607 residues long: Elongation factor 4 (607 aa).

The 183-residue stretch at 11-193 folds into the tr-type G domain; the sequence is EKIRNFSIIA…QIVEKVPAPT (183 aa). GTP is bound by residues 23-28 and 140-143; these read DHGKST and NKID.

It belongs to the TRAFAC class translation factor GTPase superfamily. Classic translation factor GTPase family. LepA subfamily.

The protein localises to the cell membrane. It catalyses the reaction GTP + H2O = GDP + phosphate + H(+). In terms of biological role, required for accurate and efficient protein synthesis under certain stress conditions. May act as a fidelity factor of the translation reaction, by catalyzing a one-codon backward translocation of tRNAs on improperly translocated ribosomes. Back-translocation proceeds from a post-translocation (POST) complex to a pre-translocation (PRE) complex, thus giving elongation factor G a second chance to translocate the tRNAs correctly. Binds to ribosomes in a GTP-dependent manner. The chain is Elongation factor 4 from Streptococcus gordonii (strain Challis / ATCC 35105 / BCRC 15272 / CH1 / DL1 / V288).